The primary structure comprises 152 residues: Ninjurin-1 (152 aa).

Position 1 is an N-acetylmethionine (M1). The segment at 1-26 (MDSGTEEYELNGGLPPGTPGSPDASP) is disordered. At 1–78 (MDSGTEEYEL…EQGPSFAFYV (78 aa)) the chain is on the extracellular side. Phosphoserine is present on residues S21 and S25. Residues 26 to 37 (PARWGWRHGPIN) form an N-terminal adhesion motif region. Residues 40 to 69 (HYASKKSAAESMLDIALLMANASQLKAVVE) form a required to induce plasma membrane rupture region. Residues 44–55 (KKSAAESMLDIA) form a helix alpha1 region. Residues 58–74 (MANASQLKAVVEQGPSF) are helix alpha2. A glycan (N-linked (GlcNAc...) asparagine) is linked at N60. A helical transmembrane segment spans residues 79 to 103 (PLVVLISISLVLQIGVGVLLIFLVK). At 104 to 113 (YDLNNPAKHA) the chain is on the cytoplasmic side. A helical transmembrane segment spans residues 114-138 (KLDFLNNLATGLVFIIVVVNIFITA). Topologically, residues 139–152 (FGVQKPLMDMAPQQ) are extracellular.

Belongs to the ninjurin family. In terms of assembly, homodimer; in absence of death stimuli, forms an inactive homodimer. Homooligomer; in response to death stimuli, homooligomerizes into long, highly branched filaments and large, ring-shaped structures in the membrane. Post-translationally, cleaved by MMP9 protease to generate the Secreted ninjurin-1 form. N-linked glycosylation is required for homooligomerization. Widely expressed in both adult and embryonic tissues, primarily those of epithelial origin.

The protein localises to the cell membrane. It localises to the synaptic cell membrane. It is found in the secreted. In response to death stimuli, homooligomerizes and disrupts membrane integrity by introducing the hydrophilic faces of alpha1 and alpha2 helices into the hydrophobic membrane. Homooligomerization and ability to mediate plasma membrane rupture is inhibited by glycine; it is unclear whether glycine directly or indirectly inhibits homooligomerization. In normal conditions, NINJ1 is autoinhibited via formation of a homodimer: in the inactive homodimer, the alpha1 and alpha2 helices (residues 44-74) form a single transmembrane region without a kink, in which hydrophilic faces of alpha1 and alpha2 helices are sequestered. In terms of biological role, effector of various programmed cell death, such as pyroptosis and necroptosis, which mediates plasma membrane rupture (cytolysis). Oligomerizes in response to death stimuli and forms ring-like structures on the plasma membrane: acts by cutting and shedding membrane disks, like a cookie cutter, leading to membrane damage and loss that cannot be repaired by the cell. Plasma membrane rupture leads to release intracellular molecules named damage-associated molecular patterns (DAMPs) that propagate the inflammatory response. Mechanistically, mediates plasma membrane rupture by introducing hydrophilic faces of 2 alpha helices into the hydrophobic membrane. Induces plasma membrane rupture downstream of Gasdermin (GSDMA, GSDMB, GSDMC, GSDMD, or GSDME) or MLKL during pyroptosis or necroptosis, respectively. Acts as an effector of PANoptosis downstream of CASP1, CASP4, CASP8 and RIPK3. Also induces plasma membrane rupture in response to cell swelling caused by osmotic stress and ferroptosis downstream of lipid peroxidation. Acts as a regulator of Toll-like receptor 4 (TLR4) signaling triggered by lipopolysaccharide (LPS) during systemic inflammation; directly binds LPS. Involved in leukocyte migration during inflammation by promoting transendothelial migration of macrophages via homotypic binding. Promotes the migration of monocytes across the brain endothelium to central nervous system inflammatory lesions. Also acts as a homophilic transmembrane adhesion molecule involved in various processes such as axonal growth, cell chemotaxis and angiogenesis. Promotes cell adhesion by mediating homophilic interactions via its extracellular N-terminal adhesion motif (N-NAM). Involved in the progression of the inflammatory stress by promoting cell-to-cell interactions between immune cells and endothelial cells. Plays a role in nerve regeneration by promoting maturation of Schwann cells. Acts as a regulator of angiogenesis. Promotes the formation of new vessels by mediating the interaction between capillary pericyte cells and endothelial cells. Promotes osteoclasts development by enhancing the survival of prefusion osteoclasts. Also involved in striated muscle growth and differentiation. Functionally, secreted form generated by cleavage, which has chemotactic activity. Acts as an anti-inflammatory mediator by promoting monocyte recruitment, thereby ameliorating atherosclerosis. In Homo sapiens (Human), this protein is Ninjurin-1.